The following is a 626-amino-acid chain: Serine/threonine-protein kinase PknH (626 aa).

The Cytoplasmic segment spans residues 1 to 403 (MSDAQDSRVG…QTPRKTNPWP (403 aa)). The 261-residue stretch at 16-276 (YHLKRLLGRG…DLALAAHEAL (261 aa)) folds into the Protein kinase domain. ATP-binding positions include 22–30 (LGRGGMGEV) and Lys45. The active-site Proton acceptor is Asp139. Thr170 is modified (phosphothreonine). The tract at residues 292–396 (QESTLPAPPK…GGPSPWAQTP (105 aa)) is disordered. Pro residues-rich tracts occupy residues 297-308 (PAPPKPVPPPTM) and 316-342 (RQPP…PAQP). The segment covering 343-355 (GPAGQRPGPTGQP) has biased composition (low complexity). The helical transmembrane segment at 404-424 (LVAGAAAVVLVLVLGAIGIWI) threads the bilayer. Topologically, residues 425–626 (AIRPKPVQPP…AKIVDKVNKE (202 aa)) are extracellular. 2 disulfides stabilise this stretch: Cys482–Cys545 and Cys587–Cys604.

This sequence belongs to the protein kinase superfamily. Ser/Thr protein kinase family. The cofactor is a divalent metal cation. In terms of processing, autophosphorylated on threonine and serine residues. Dephosphorylated by PstP.

It is found in the cell membrane. It catalyses the reaction L-seryl-[protein] + ATP = O-phospho-L-seryl-[protein] + ADP + H(+). The catalysed reaction is L-threonyl-[protein] + ATP = O-phospho-L-threonyl-[protein] + ADP + H(+). In terms of biological role, may regulate bacterial growth in response to external signals to facilitate adaptation to the host environment. The chain is Serine/threonine-protein kinase PknH (pknH) from Mycobacterium tuberculosis (strain CDC 1551 / Oshkosh).